A 208-amino-acid chain; its full sequence is N-(5'-phosphoribosyl)anthranilate isomerase (208 aa).

The protein belongs to the TrpF family.

It catalyses the reaction N-(5-phospho-beta-D-ribosyl)anthranilate = 1-(2-carboxyphenylamino)-1-deoxy-D-ribulose 5-phosphate. It functions in the pathway amino-acid biosynthesis; L-tryptophan biosynthesis; L-tryptophan from chorismate: step 3/5. The chain is N-(5'-phosphoribosyl)anthranilate isomerase from Staphylococcus haemolyticus (strain JCSC1435).